Here is a 377-residue protein sequence, read N- to C-terminus: Cytoplasmic tRNA 2-thiolation protein 1 (377 aa).

This sequence belongs to the TtcA family. CTU1/NCS6/ATPBD3 subfamily.

It is found in the cytoplasm. It participates in tRNA modification; 5-methoxycarbonylmethyl-2-thiouridine-tRNA biosynthesis. Plays a central role in 2-thiolation of mcm(5)S(2)U at tRNA wobble positions of tRNA(Lys), tRNA(Glu) and tRNA(Gln). Directly binds tRNAs and probably acts by catalyzing adenylation of tRNAs, an intermediate required for 2-thiolation. It is unclear whether it acts as a sulfurtransferase that transfers sulfur from thiocarboxylated URM1 onto the uridine of tRNAs at wobble position. Prior mcm(5) tRNA modification by the elongator complex is required for 2-thiolation. May also be involved in protein urmylation. In Debaryomyces hansenii (strain ATCC 36239 / CBS 767 / BCRC 21394 / JCM 1990 / NBRC 0083 / IGC 2968) (Yeast), this protein is Cytoplasmic tRNA 2-thiolation protein 1.